A 61-amino-acid chain; its full sequence is Furostanol glycoside 26-O-beta-glucosidase (61 aa).

Asp-33 functions as the Proton donor/acceptor in the catalytic mechanism. Asp-33 is a D-glucose binding site.

This sequence belongs to the glycosyl hydrolase 3 family. As to quaternary structure, monomer. In terms of processing, glycosylated. As to expression, expressed in petioles and leaves, but not in fruits.

The catalysed reaction is protodioscin + H2O = 26-deglucoprotodioscin + D-glucose. With respect to regulation, inhibited by Hg(2+) and D-glucono-1,5-lactone. Functionally, beta-glucosidase highly specific for the cleavage of C-26-bound glucose moiety of furostanol glycosides torvosides A and H. Hydrolyzes only p-nitrophenyl-beta-glucoside, but not p-nitrophenyl-beta-D-fucoside, p-nitrophenyl-beta-L-fucoside, p-nitrophenyl-beta-D-xyloside, p-nitrophenyl-beta-D-galactoside, p-nitrophenyl-beta-D-NAc-glucosamine, p-nitrophenyl-beta-D-mannoside or any of the p-nitrophenyl-alpha-glycosides tested. In Solanum torvum (Turkey berry), this protein is Furostanol glycoside 26-O-beta-glucosidase.